A 349-amino-acid polypeptide reads, in one-letter code: Phosphoribosylformylglycinamidine cyclo-ligase (349 aa).

The protein belongs to the AIR synthase family.

Its subcellular location is the cytoplasm. The enzyme catalyses 2-formamido-N(1)-(5-O-phospho-beta-D-ribosyl)acetamidine + ATP = 5-amino-1-(5-phospho-beta-D-ribosyl)imidazole + ADP + phosphate + H(+). It participates in purine metabolism; IMP biosynthesis via de novo pathway; 5-amino-1-(5-phospho-D-ribosyl)imidazole from N(2)-formyl-N(1)-(5-phospho-D-ribosyl)glycinamide: step 2/2. The protein is Phosphoribosylformylglycinamidine cyclo-ligase of Albidiferax ferrireducens (strain ATCC BAA-621 / DSM 15236 / T118) (Rhodoferax ferrireducens).